The following is a 286-amino-acid chain: Ribosome-inactivating protein beta-momorcharin (286 aa).

Residues 1-23 (MVKCLLLSFLIIAIFIGVPTAKG) form the signal peptide. A glycan (N-linked (GlcNAc...) asparagine) is linked at Asn-74. Active-site residues include Tyr-93, Tyr-132, Glu-181, and Arg-184.

Belongs to the ribosome-inactivating protein family. Type 1 RIP subfamily. Bound to a branched hexasaccharide.

It catalyses the reaction Endohydrolysis of the N-glycosidic bond at one specific adenosine on the 28S rRNA.. Functionally, irreversibly relaxes supercoiled DNA and catalyzes double-stranded breakage. Also acts as a ribosome inactivating protein. This Momordica charantia (Bitter gourd) protein is Ribosome-inactivating protein beta-momorcharin (MAP30).